The sequence spans 255 residues: Vitamin B12 import ATP-binding protein BtuD (255 aa).

In terms of domain architecture, ABC transporter spans 2 to 240 (MRVKHIAVGS…AGLAEVFKTQ (239 aa)). 30-37 (GPNGSGKS) provides a ligand contact to ATP.

Belongs to the ABC transporter superfamily. Vitamin B12 importer (TC 3.A.1.13.1) family. In terms of assembly, the complex is composed of two ATP-binding proteins (BtuD), two transmembrane proteins (BtuC) and a solute-binding protein (BtuF).

Its subcellular location is the cell inner membrane. The catalysed reaction is an R-cob(III)alamin(out) + ATP + H2O = an R-cob(III)alamin(in) + ADP + phosphate + H(+). Its function is as follows. Part of the ABC transporter complex BtuCDF involved in vitamin B12 import. Responsible for energy coupling to the transport system. The sequence is that of Vitamin B12 import ATP-binding protein BtuD from Vibrio parahaemolyticus serotype O3:K6 (strain RIMD 2210633).